The primary structure comprises 183 residues: Ribosome maturation factor RimM (183 aa).

The region spanning 105–181 (ANEYHLMDLI…RIEIDPPLGL (77 aa)) is the PRC barrel domain.

The protein belongs to the RimM family. In terms of assembly, binds ribosomal protein uS19.

The protein localises to the cytoplasm. An accessory protein needed during the final step in the assembly of 30S ribosomal subunit, possibly for assembly of the head region. Essential for efficient processing of 16S rRNA. May be needed both before and after RbfA during the maturation of 16S rRNA. It has affinity for free ribosomal 30S subunits but not for 70S ribosomes. The protein is Ribosome maturation factor RimM of Thermosynechococcus vestitus (strain NIES-2133 / IAM M-273 / BP-1).